The primary structure comprises 125 residues: Small ribosomal subunit protein uS12m (125 aa).

Disordered stretches follow at residues 1-29 and 105-125; these read MPTK…QCPQ and LGIP…PKSK. The segment covering 10–23 has biased composition (basic and acidic residues); that stretch reads HGREEKQRTDRTRA.

It belongs to the universal ribosomal protein uS12 family.

Its subcellular location is the mitochondrion. Functionally, protein S12 is involved in the translation initiation step. This chain is Small ribosomal subunit protein uS12m (RPS12), found in Oryza sativa subsp. japonica (Rice).